Reading from the N-terminus, the 293-residue chain is Ribosomal protein L11 methyltransferase (293 aa).

The S-adenosyl-L-methionine site is built by Thr-145, Gly-166, Asp-188, and Asn-230.

The protein belongs to the methyltransferase superfamily. PrmA family.

The protein resides in the cytoplasm. It catalyses the reaction L-lysyl-[protein] + 3 S-adenosyl-L-methionine = N(6),N(6),N(6)-trimethyl-L-lysyl-[protein] + 3 S-adenosyl-L-homocysteine + 3 H(+). Its function is as follows. Methylates ribosomal protein L11. This is Ribosomal protein L11 methyltransferase from Erwinia tasmaniensis (strain DSM 17950 / CFBP 7177 / CIP 109463 / NCPPB 4357 / Et1/99).